We begin with the raw amino-acid sequence, 388 residues long: MKLMETLNQCINAGHEMTKAIAIAQFNDDSPEARKITRRWRIGEAADLVGVSSQAIRDAEKAGRLPHPDMEIRGRVEQRVGYTIEQINHMRDVFGTRLRRAEDVFPPVIGVAAHKGGVYKTSVSVHLAQDLALKGLRVLLVEGNDPQGTASMYHGWVPDLHIHAEDTLLPFYLGEKDDVTYAIKPTCWPGLDIIPSCLALHRIETELMGKFDEGKLPTDPHLMLRLAIETVAHDYDVIVIDSAPNLGIGTINVVCAADVLIVPTPAELFDYTSALQFFDMLRDLLKNVDLKGFEPDVRILLTKYSNSNGSQSPWMEEQIRDAWGSMVLKNVVRETDEVGKGQIRMRTVFEQAIDQRSSTGAWRNALSIWEPVCNEIFDRLIKPRWEIR.

Belongs to the ParA family.

This protein is essential for plasmid partition. It ensures the proper distribution of newly replicated plasmids to daughter cells during cell division. SopA is trans-acting. The chain is Protein SopA (sopA) from Escherichia coli O157:H7.